The following is a 147-amino-acid chain: Cyanate hydratase (147 aa).

Residues Arg88, Glu91, and Ser114 contribute to the active site.

The protein belongs to the cyanase family.

The enzyme catalyses cyanate + hydrogencarbonate + 3 H(+) = NH4(+) + 2 CO2. In terms of biological role, catalyzes the reaction of cyanate with bicarbonate to produce ammonia and carbon dioxide. The protein is Cyanate hydratase of Acaryochloris marina (strain MBIC 11017).